The primary structure comprises 487 residues: Gasdermin-D (487 aa).

Y38 carries the phosphotyrosine modification. 3 positions are modified to S-(2-succinyl)cysteine: C39, C57, and C77. Beta stranded transmembrane passes span 92-98 (QGRVMLS) and 104-109 (KISGGA). C122 carries the S-(2-succinyl)cysteine modification. 2 beta stranded membrane passes run 181–187 (GSGQFTL) and 192–198 (CLKGEGK). Residues C192 and C265 each carry the S-(2-succinyl)cysteine modification. A lipid anchor (S-palmitoyl cysteine) is attached at C192. A linker helix loop region spans residues 278–298 (IDEEELIEAADFQGLYAEVKA). S-(2-succinyl)cysteine is present on residues C299, C434, and C487.

It belongs to the gasdermin family. Homooligomer; homooligomeric ring-shaped pore complex containing 27-28 subunits when inserted in the membrane. Homooligomerization is promoted by the mTORC1 complex in macrophages. In response to a canonical inflammasome stimulus, such as nigericin, recruited to NLRP3 inflammasone with similar kinetics to that of uncleaved CASP1 precursor. Although this recruitment is also observed in the absence of PYCARD, it is more efficient in its presence. Post-translationally, cleavage at Asp-276 by CASP1 (mature and uncleaved precursor forms), CASP4/CASP11 or CASP8 relieves autoinhibition and is sufficient to initiate pyroptosis. Cleavage by CASP1 and CASP4/CASP11 is not strictly dependent on the consensus cleavage site on GSDMD but depends on an exosite interface on CASP1 that recognizes and binds the Gasdermin-D, C-terminal (GSDMD-CT) part. Cleavage by CASP8 takes place following inactivation of MAP3K7/TAK1 by Yersinia toxin YopJ. Cleavage at Asp-88 by CASP3 or CASP7 inactivates the ability to mediate pyroptosis, but generates the Gasdermin-D, p13 chain, which translocates to the nucleus and acts as a transcription regulator. Cleavage by papain allergen generates the Gasdermin-D, p40 chain. Palmitoylated at Cys-192 by ZDHHC5 and ZDHHC9 in response to microbial infection and danger signals. May also be palmitoylated by ZDHHC7. Palmitoylation takes place before cleavage by caspases (CASP1, CASP4, CASP5 or CASP8) and is required for membrane translocation and pore formation. Depalmitoylated by LYPLA2. In terms of processing, succination of Cys-192 by the Krebs cycle intermediate fumarate, which leads to S-(2-succinyl)cysteine residues, inhibits processing by caspases, and ability to initiate pyroptosis. Succination modification is catalyzed by a non-enzymatic reaction caused by an accumulation of fumarate. Post-translationally, glycosylated: O-GlcNAcylation by OGT leads to reduced cleavage by CASP4 and decreased LPS-induced endothelial cell pyroptosis. As to expression, highly expressed in brain endothelial cells.

It localises to the cytoplasm. The protein localises to the cytosol. It is found in the inflammasome. Its subcellular location is the cell membrane. The protein resides in the secreted. It localises to the mitochondrion membrane. The protein localises to the nucleus. With respect to regulation, the full-length protein before cleavage is inactive: intramolecular interactions between N- and C-terminal domains mediate autoinhibition in the absence of activation signal. The intrinsic pyroptosis-inducing activity is carried by the released N-terminal moiety (Gasdermin-D, N-terminal) following cleavage by inflammatory caspases CASP1, CASP4/CASP11 or CASP8. Cleavage at Asp-88 by CASP3 or CASP7 inactivates the ability to mediate pyroptosis. Pore formation is specifically inhibited by VHH(GSDMD-1) nanobody, protecting against excessive pyroptosis. Inhibited by small molecule NU6300, which covalently reacts with Cys-191, thereby preventing palmitoylation and pyroptosis. In terms of biological role, precursor of a pore-forming protein that plays a key role in host defense against pathogen infection and danger signals. This form constitutes the precursor of the pore-forming protein: upon cleavage, the released N-terminal moiety (Gasdermin-D, N-terminal) binds to membranes and forms pores, triggering pyroptosis. Functionally, promotes pyroptosis in response to microbial infection and danger signals. Produced by the cleavage of gasdermin-D by inflammatory caspases CASP1 or CASP4/CASP11 in response to canonical, as well as non-canonical (such as cytosolic LPS) inflammasome activators. After cleavage, moves to the plasma membrane where it strongly binds to inner leaflet lipids, including monophosphorylated phosphatidylinositols, such as phosphatidylinositol 4-phosphate, bisphosphorylated phosphatidylinositols, such as phosphatidylinositol (4,5)-bisphosphate, as well as phosphatidylinositol (3,4,5)-bisphosphate, and more weakly to phosphatidic acid and phosphatidylserine. Homooligomerizes within the membrane and forms pores of 10-15 nanometers (nm) of inner diameter, allowing the release of mature interleukin-1 (IL1B and IL18) and triggering pyroptosis. Gasdermin pores also allow the release of mature caspase-7 (CASP7). In some, but not all, cells types, pyroptosis is followed by pyroptotic cell death, which is caused by downstream activation of ninjurin-1 (NINJ1), which mediates membrane rupture (cytolysis). Also forms pores in the mitochondrial membrane, resulting in release of mitochondrial DNA (mtDNA) into the cytosol. Gasdermin-D, N-terminal released from pyroptotic cells into the extracellular milieu rapidly binds to and kills both Gram-negative and Gram-positive bacteria, without harming neighboring mammalian cells, as it does not disrupt the plasma membrane from the outside due to lipid-binding specificity. Under cell culture conditions, also active against intracellular bacteria, such as Listeria monocytogenes. Also active in response to MAP3K7/TAK1 inactivation by Yersinia toxin YopJ, which triggers cleavage by CASP8 and subsequent activation. Required for mucosal tissue defense against enteric pathogens. Activation of the non-canonical inflammasome in brain endothelial cells can lead to excessive pyroptosis, leading to blood-brain barrier breakdown. Strongly binds to bacterial and mitochondrial lipids, including cardiolipin. Does not bind to unphosphorylated phosphatidylinositol, phosphatidylethanolamine nor phosphatidylcholine. Its function is as follows. Transcription coactivator produced by the cleavage by CASP3 or CASP7 in the upper small intestine in response to dietary antigens. Required to maintain food tolerance in small intestine: translocates to the nucleus and acts as a coactivator for STAT1 to induce the transcription of CIITA and MHC class II molecules, which in turn induce type 1 regulatory T (Tr1) cells in upper small intestine. Produced by the cleavage by papain allergen. After cleavage, moves to the plasma membrane and homooligomerizes within the membrane and forms pores of 10-15 nanometers (nm) of inner diameter, allowing the specific release of mature interleukin-33 (IL33), promoting type 2 inflammatory immune response. In Mus musculus (Mouse), this protein is Gasdermin-D.